A 536-amino-acid chain; its full sequence is MAKQLAFNDAARRSLEAGIDKLANTVKVTLGPRGRNVVLDKKWGAPTITNDGVTIAREVELDDPFENLGAQLAKEVATKTNDVAGDGTTTATVLAQALVKEGLRNVAAGAAPGQIKRGIEVSVEAVAARLLENARPVEGSQVANVAAISAQSDEIGELLAEAFGKVGKDGVITIEESSTTQTELVLTEGMQFDKGYLSPYFVTDAERQEAVLEDALILINQGKISSVQEFLPLLEKALQSSKPLFIIAEDVEGEALSTLIVNRIRGTLNVVAVKAPGFGDRRKAMLQDIATLTGAQVVSPELGLSLDSVGLEVLGTARRITVTKDNTTIVDGAGTAEDVAARVAQLRAELTRTDSDWDKEKLQERLAKLAGGIGVIKVGAATEVELKEKKHRIEDAVSSTRAALEEGIVAGGGSALIHALKALDEDPAVTALEGDAASAVGIVRRALVQPLRWIAQNAGFDGYVVAAKVAESAVNQGFNAKSGDYEDLIAAGVIDPVKVTRAALRNAASIAALVLTTETLVVEKPADEDEHAGHKH.

Residues 29–32 (TLGP), 86–90 (DGTTT), Gly-412, and Asp-495 contribute to the ATP site.

The protein belongs to the chaperonin (HSP60) family. Forms a cylinder of 14 subunits composed of two heptameric rings stacked back-to-back. Interacts with the co-chaperonin GroES.

It is found in the cytoplasm. It catalyses the reaction ATP + H2O + a folded polypeptide = ADP + phosphate + an unfolded polypeptide.. Together with its co-chaperonin GroES, plays an essential role in assisting protein folding. The GroEL-GroES system forms a nano-cage that allows encapsulation of the non-native substrate proteins and provides a physical environment optimized to promote and accelerate protein folding. This is Chaperonin GroEL 2 from Arthrobacter sp. (strain FB24).